The chain runs to 242 residues: uncharacterized protein (242 aa).

Over residues 1-12 (MKLRRERFERRN) the composition is skewed to basic and acidic residues. The tract at residues 1–21 (MKLRRERFERRNGSGKNSQSS) is disordered. Over 1–23 (MKLRRERFERRNGSGKNSQSSSS) the chain is Cytoplasmic. Residues 24–44 (WMVTFTDLITLILVFFILLFS) traverse the membrane as a helical segment. Over 45–242 (MSQIDLQKFK…VIKKSKTTSS (198 aa)) the chain is Extracellular. Positions 64 to 91 (GNGLQPDQTSIEKKNTSPSDTKKQEDQQ) are disordered. Positions 73 to 89 (SIEKKNTSPSDTKKQED) are enriched in basic and acidic residues. One can recognise an OmpA-like domain in the interval 117–238 (ERGVVLVLQE…RVEIVIKKSK (122 aa)).

It belongs to the MotB family.

The protein resides in the cell membrane. Its function is as follows. May be involved in some transport function. This is an uncharacterized protein from Bacillus subtilis (strain 168).